A 312-amino-acid chain; its full sequence is Olfactory receptor 7D4 (312 aa).

The Extracellular segment spans residues 1–25 (MEAENLTELSKFLLLGLSDDPELQP). Residue Asn5 is glycosylated (N-linked (GlcNAc...) asparagine). Residues 26-46 (VLFGLFLSMYLVTVLGNLLII) form a helical membrane-spanning segment. Residues 47 to 54 (LAVSSDSH) are Cytoplasmic-facing. Residues 55–75 (LHTPMYFFLSNLSFVDICFIS) form a helical membrane-spanning segment. Residues 76-99 (TTVPKMLVSIQARSKDISYMGCLT) are Extracellular-facing. Cys97 and Cys189 are oxidised to a cystine. A helical transmembrane segment spans residues 100–120 (QVYFLMMFAGMDTFLLAVMAY). Residues 121–139 (DRFVAICHPLHYTVIMNPC) lie on the Cytoplasmic side of the membrane. A helical transmembrane segment spans residues 140–160 (LCGLLVLASWFIIFWFSLVHI). Residues 161–197 (LLMKRLTFSTGTEIPHFFCEPAQVLKVACSNTLLNNI) lie on the Extracellular side of the membrane. The helical transmembrane segment at 198 to 217 (VLYVATALLGVFPVAGILFS) threads the bilayer. The Cytoplasmic segment spans residues 218-237 (YSQIVSSLMGMSSTKGKYKA). The helical transmembrane segment at 238 to 258 (FSTCGSHLCVVSLFYGTGLGV) threads the bilayer. The Extracellular segment spans residues 259-271 (YLSSAVTHSSQSS). The chain crosses the membrane as a helical span at residues 272–292 (STASVMYAMVTPMLNPFIYSL). At 293–312 (RNKDVKGALERLLSRADSCP) the chain is on the cytoplasmic side.

Belongs to the G-protein coupled receptor 1 family. As to expression, nasal olfactory epithelium.

It is found in the cell membrane. Its function is as follows. Odorant receptor. Selectively activated by androstenone and the related odorous steroid androstadienone. This chain is Olfactory receptor 7D4 (OR7D4), found in Homo sapiens (Human).